A 1139-amino-acid polypeptide reads, in one-letter code: Solute carrier family 12 member 5 (1139 aa).

2 disordered regions span residues 1 to 62 (MSRR…KGRE) and 95 to 116 (PQGSKEHEEAENNEGGKKKPVQ). Topologically, residues 1 to 98 (MSRRFTVTSL…ANYTNLPQGS (98 aa)) are cytoplasmic. Residues 21-45 (PESRRHSVADPRRLPREDVKGDGNP) are compositionally biased toward basic and acidic residues. Residues 46 to 55 (KESSPFINST) are compositionally biased toward polar residues. At Thr-57 the chain carries Phosphothreonine. Residues 98–111 (SKEHEEAENNEGGK) show a composition bias toward basic and acidic residues. A discontinuously helical membrane pass occupies residues 99–120 (KEHEEAENNEGGKKKPVQAPRM). Position 113 (Lys-113) interacts with K(+). Topologically, residues 121–129 (GTFMGVYLP) are extracellular. Residues 130–151 (CLQNIFGVILFLRLTWVVGIAG) traverse the membrane as a helical segment. Over 152-174 (IMESFCMVFICCSCTMLTAISMS) the chain is Cytoplasmic. A helical membrane pass occupies residues 175 to 203 (AIATNGVVPAGGSYYMISRSLGPEFGGAV). Position 184 (Ala-184) interacts with chloride. Topologically, residues 204-229 (GLCFYLGTTFAGAMYILGTIEILLAY) are extracellular. 2 helical membrane passes run 230 to 250 (LFPAMAIFKAEDASGEAAAML) and 251 to 276 (NNMRVYGTCVLTCMATVVFVGVKYVN). Residues 277–402 (KFALVFLGCV…ERRGMPSVGL (126 aa)) lie on the Extracellular side of the membrane. Cys-310 and Cys-325 are disulfide-bonded. Residues Asn-314, Asn-333, Asn-351, and Asn-362 are each glycosylated (N-linked (GlcNAc...) asparagine). Cys-345 and Cys-354 are joined by a disulfide. Residues 403 to 420 (ADGTPVDMDHPYVFSDMT) form a helical membrane-spanning segment. Met-410 serves as a coordination point for K(+). 2 residues coordinate chloride: Tyr-414 and Val-415. Over 421-429 (SYFTLLVGI) the chain is Cytoplasmic. Residues 430–453 (YFPSVTGIMAGSNRSGDLRDAQKS) traverse the membrane as a helical segment. Asp-446 provides a ligand contact to K(+). The Extracellular segment spans residues 454–485 (IPTGTILAIATTSAVYISSVVLFGACIEGVVL). Residues 486–513 (RDKFGEAVNGNLVVGTLAWPSPWVIVIG) traverse the membrane as a helical segment. Residues 514–534 (SFFSTCGAGLQSLTGAPRLLQ) are Cytoplasmic-facing. 2 consecutive transmembrane segments (helical) span residues 535–555 (AISRDGIVPFLQVFGHGKANG) and 556–578 (EPTWALLLTACICEIGILIASLD). Glu-569 serves as a coordination point for chloride. Over 579 to 592 (EVAPILSMFFLMCY) the chain is Cytoplasmic. 2 consecutive transmembrane segments (helical) span residues 593 to 615 (MFVNLACAVQTLLRTPNWRPRFR) and 616 to 632 (YYHWTLSFLGMSLCLAL). The Cytoplasmic segment spans residues 633–1139 (MFICSWYYAL…GGREVITIYS (507 aa)). The interval 667-681 (GIRGLSLSAARYALL) is scissor helix. At Thr-929 the chain carries Phosphothreonine; by OXSR1 and STK39. The segment at 943-1025 (HLTKNERERE…PEGEGETDPE (83 aa)) is disordered. Over residues 945 to 962 (TKNEREREIQSITDESRG) the composition is skewed to basic and acidic residues. Residues 982-994 (TACDNEEKPEEEV) show a composition bias toward acidic residues. The span at 1003 to 1012 (PSCPSSSPSP) shows a compositional bias: low complexity. At Thr-1030 the chain carries Phosphothreonine; by OXSR1 and STK39. The segment at 1033 to 1052 (KDKSAAQKNKGPSPVSSEGI) is disordered. Phosphoserine occurs at positions 1045, 1048, and 1049.

It belongs to the SLC12A transporter family. K/Cl co-transporter subfamily. In terms of assembly, homodimer; adopts a domain-swap conformation at the scissor helices connecting the transmembrane domain and C-terminal domain. Heterodimer wHeterodimer with K-Cl cotransporters SLC12A6 and SLC12A7. Interacts with AP2A1. Phosphorylated at Thr-929 and Thr-1030 by OXSR1/OSR1 and STK39/SPAK downstream of WNK kinases (WNK1, WNK2, WNK3 or WNK4), inhibiting the potassium-chloride cotransport activity. As to expression, highly expressed in brain. Not detected in other tissues. Highly expressed in pyramidal neurons and in neurons throughout the cortex, hippocampus, the granular layer of the cerebellum and in groups of neurons throughout the brainstem. Barely detectable in dorsal-root ganglions.

The protein localises to the cell membrane. It localises to the cell projection. It is found in the dendrite. The catalysed reaction is K(+)(in) + chloride(in) = K(+)(out) + chloride(out). Its activity is regulated as follows. Inhibited following phosphorylation by OXSR1/OSR1 and STK39/SPAK: phosphorylation takes place downstream of WNK kinases (WNK1, WNK2, WNK3 or WNK4) in response to hyperosmotic stress and subsequent cell shrinkage. Functionally, mediates electroneutral potassium-chloride cotransport in mature neurons and is required for neuronal Cl(-) homeostasis. As major extruder of intracellular chloride, it establishes the low neuronal Cl(-) levels required for chloride influx after binding of GABA-A and glycine to their receptors, with subsequent hyperpolarization and neuronal inhibition. Involved in the regulation of dendritic spine formation and maturation. The polypeptide is Solute carrier family 12 member 5 (Slc12a5) (Rattus norvegicus (Rat)).